Reading from the N-terminus, the 316-residue chain is WSCD family member GA21586 (316 aa).

A helical membrane pass occupies residues 8–28 (FFGVSATIIIYIGGVLFLSMN). N-linked (GlcNAc...) asparagine glycans are attached at residues asparagine 78, asparagine 150, asparagine 226, and asparagine 232.

The protein belongs to the WSCD family.

It is found in the membrane. The sequence is that of WSCD family member GA21586 from Drosophila pseudoobscura pseudoobscura (Fruit fly).